The primary structure comprises 93 residues: RNA-binding protein Hfq (93 aa).

The region spanning 9-68 (DPFLNALRRERVPVSIYLVNGIKLQGQVESFDQFVILLKNTVSQMVYKHAISTVVPARPF) is the Sm domain. The interval 70–93 (VNSHTAAPSPAGGFNGQQDDNNDQ) is disordered.

It belongs to the Hfq family. In terms of assembly, homohexamer.

Its function is as follows. RNA chaperone that binds small regulatory RNA (sRNAs) and mRNAs to facilitate mRNA translational regulation in response to envelope stress, environmental stress and changes in metabolite concentrations. Also binds with high specificity to tRNAs. This chain is RNA-binding protein Hfq, found in Shewanella sediminis (strain HAW-EB3).